Here is a 366-residue protein sequence, read N- to C-terminus: Histidinol-phosphate aminotransferase 2 (366 aa).

Lys226 bears the N6-(pyridoxal phosphate)lysine mark.

The protein belongs to the class-II pyridoxal-phosphate-dependent aminotransferase family. Histidinol-phosphate aminotransferase subfamily. As to quaternary structure, homodimer. Pyridoxal 5'-phosphate serves as cofactor.

The enzyme catalyses L-histidinol phosphate + 2-oxoglutarate = 3-(imidazol-4-yl)-2-oxopropyl phosphate + L-glutamate. It functions in the pathway amino-acid biosynthesis; L-histidine biosynthesis; L-histidine from 5-phospho-alpha-D-ribose 1-diphosphate: step 7/9. The sequence is that of Histidinol-phosphate aminotransferase 2 from Cupriavidus pinatubonensis (strain JMP 134 / LMG 1197) (Cupriavidus necator (strain JMP 134)).